The chain runs to 388 residues: Probable tRNA sulfurtransferase (388 aa).

One can recognise a THUMP domain in the interval 55–162; sequence VTLDDKLKKI…PEGVLIFTDR (108 aa). ATP-binding positions include 180–181, 205–206, R264, G286, and Q295; these read LL and TF.

It belongs to the ThiI family.

The protein resides in the cytoplasm. The enzyme catalyses [ThiI sulfur-carrier protein]-S-sulfanyl-L-cysteine + a uridine in tRNA + 2 reduced [2Fe-2S]-[ferredoxin] + ATP + H(+) = [ThiI sulfur-carrier protein]-L-cysteine + a 4-thiouridine in tRNA + 2 oxidized [2Fe-2S]-[ferredoxin] + AMP + diphosphate. It catalyses the reaction [ThiS sulfur-carrier protein]-C-terminal Gly-Gly-AMP + S-sulfanyl-L-cysteinyl-[cysteine desulfurase] + AH2 = [ThiS sulfur-carrier protein]-C-terminal-Gly-aminoethanethioate + L-cysteinyl-[cysteine desulfurase] + A + AMP + 2 H(+). The protein operates within cofactor biosynthesis; thiamine diphosphate biosynthesis. Catalyzes the ATP-dependent transfer of a sulfur to tRNA to produce 4-thiouridine in position 8 of tRNAs, which functions as a near-UV photosensor. Also catalyzes the transfer of sulfur to the sulfur carrier protein ThiS, forming ThiS-thiocarboxylate. This is a step in the synthesis of thiazole, in the thiamine biosynthesis pathway. The sulfur is donated as persulfide by IscS. The chain is Probable tRNA sulfurtransferase from Thermotoga maritima (strain ATCC 43589 / DSM 3109 / JCM 10099 / NBRC 100826 / MSB8).